The sequence spans 198 residues: Dual specificity protein phosphatase 1 (198 aa).

Residues 1–20 form a disordered region; sequence MSSRDRGSPSSSSSSSSLPG. Low complexity predominate over residues 8 to 17; sequence SPSSSSSSSS. The caM binding domain 1 stretch occupies residues 26–47; sequence EKVKNQIQALVRVIKVARTYRD. In terms of domain architecture, Tyrosine-protein phosphatase spans 50–191; it reads VPSLIEQGLY…LQDLEKSMQV (142 aa). Residue cysteine 135 is the Phosphocysteine intermediate of the active site. The caM binding domain 2 stretch occupies residues 151–180; sequence MKKHGMTLAQALQHVKSKRPVASPNAGFIR.

The protein belongs to the protein-tyrosine phosphatase family. Non-receptor class dual specificity subfamily. In terms of assembly, interacts with calmodulin (CaM) in a calcium Ca(2+)-dependent manner. As to expression, expressed in roots, stems, leaves and flowers.

It localises to the nucleus. The protein resides in the cytoplasm. The catalysed reaction is O-phospho-L-tyrosyl-[protein] + H2O = L-tyrosyl-[protein] + phosphate. It catalyses the reaction O-phospho-L-seryl-[protein] + H2O = L-seryl-[protein] + phosphate. The enzyme catalyses O-phospho-L-threonyl-[protein] + H2O = L-threonyl-[protein] + phosphate. With respect to regulation, inhibited by sodium vanadate and sodium tungstate. NaF and spermifine repress specifically phosphoserine and phosphothreonine phosphatase activity. Its function is as follows. Has a dual specificity toward Ser/Thr and Tyr-containing proteins. Dephosphorylates MPK4 in vitro. This Arabidopsis thaliana (Mouse-ear cress) protein is Dual specificity protein phosphatase 1 (DSPTP1).